The sequence spans 522 residues: Chromosomal replication initiator protein DnaA (522 aa).

Positions 1–71 (MQDFWHAASA…QSLACDYWEM (71 aa)) are domain I, interacts with DnaA modulators. The tract at residues 71–185 (MQVDVQFVLD…PVDDTVHERS (115 aa)) is domain II. Residues 186-402 (RLNPILTFDN…GALRKILAYS (217 aa)) are domain III, AAA+ region. Gly230, Gly232, Lys233, and Thr234 together coordinate ATP. Positions 403-522 (NFHGKEITIE…LHVLEQTLKG (120 aa)) are domain IV, binds dsDNA.

It belongs to the DnaA family. In terms of assembly, oligomerizes as a right-handed, spiral filament on DNA at oriC.

It is found in the cytoplasm. In terms of biological role, plays an essential role in the initiation and regulation of chromosomal replication. ATP-DnaA binds to the origin of replication (oriC) to initiate formation of the DNA replication initiation complex once per cell cycle. Binds the DnaA box (a 9 base pair repeat at the origin) and separates the double-stranded (ds)DNA. Forms a right-handed helical filament on oriC DNA; dsDNA binds to the exterior of the filament while single-stranded (ss)DNA is stabiized in the filament's interior. The ATP-DnaA-oriC complex binds and stabilizes one strand of the AT-rich DNA unwinding element (DUE), permitting loading of DNA polymerase. After initiation quickly degrades to an ADP-DnaA complex that is not apt for DNA replication. Binds acidic phospholipids. The sequence is that of Chromosomal replication initiator protein DnaA from Ralstonia nicotianae (strain ATCC BAA-1114 / GMI1000) (Ralstonia solanacearum).